Reading from the N-terminus, the 155-residue chain is Protein SprT-like (155 aa).

Residues 7-145 (QRHMEEVSLQ…GSCGGKLIQI (139 aa)) form the SprT-like domain. Histidine 67 is a binding site for Zn(2+). Glutamate 68 is an active-site residue. Histidine 71 serves as a coordination point for Zn(2+).

It belongs to the SprT family. It depends on Zn(2+) as a cofactor.

The protein resides in the cytoplasm. The chain is Protein SprT-like from Listeria monocytogenes serotype 4a (strain HCC23).